Reading from the N-terminus, the 133-residue chain is Secretin (133 aa).

A signal peptide spans 1–22 (MEPPLPTPMLLLLLLLLSSSAA). Positions 23–30 (LPAPPRTP) are excised as a propeptide. Valine 58 bears the Valine amide mark. Phosphoserine is present on serine 62. Residues 62–133 (SEQDTENIPE…EWTETTRPPR (72 aa)) constitute a propeptide that is removed on maturation.

This sequence belongs to the glucagon family. Highly expressed in the intestine. Also expressed in the hippocampus, cerebellum and the brain stem in adult mouse brain. In the hippocampus, expressed in the dentate gyrus, the hilus and the molecular layer.

Its subcellular location is the secreted. In terms of biological role, hormone involved in different processes, such as regulation of the pH of the duodenal content, food intake and water homeostasis. Exerts its biological effects by binding to secretin receptor (SCTR), a G-protein coupled receptor expressed in the basolateral domain of several cells. Acts as a key gastrointestinal hormone by regulating the pH of the duodenal content. Secreted by S cells of the duodenum in the crypts of Lieberkuehn and regulates the pH of the duodenum by (1) inhibiting the secretion of gastric acid from the parietal cells of the stomach and (2) stimulating the production of bicarbonate (NaHCO(3)) from the ductal cells of the pancreas. Production of bicarbonate is essential to neutralize the pH and ensure no damage is done to the small intestine by the gastric acid. In addition to regulating the pH of the duodenal content, plays a central role in diet induced thermogenesis: acts as a non-sympathetic brown fat (BAT) activator mediating prandial thermogenesis, which consequentially induces satiation. Mechanistically, secretin released by the gut after a meal binds to secretin receptor (SCTR) in brown adipocytes, activating brown fat thermogenesis by stimulating lipolysis, which is sensed in the brain and promotes satiation. Also able to stimulate lipolysis in white adipocytes. Also plays an important role in cellular osmoregulation: released into the systemic circulation in response to hyperosmolality and acts at different levels in the hypothalamus, pituitary and kidney to regulate water homeostasis. Also plays a role in the central nervous system, possibly by acting as a neuropeptide hormone: required for hippocampal synaptic function and neural progenitor cells maintenance. This Mus musculus (Mouse) protein is Secretin.